Here is an 855-residue protein sequence, read N- to C-terminus: DNA polymerase (855 aa).

Positions 107-332 (KPEMKPVFDA…LHNFFLPKIE (226 aa)) constitute a 3'-5' exonuclease domain. The polymerase stretch occupies residues 333 to 833 (KNEKLCSLYY…MDKEHPDHSK (501 aa)).

It belongs to the DNA polymerase type-A family. As to quaternary structure, single-chain monomer with multiple functions.

The catalysed reaction is DNA(n) + a 2'-deoxyribonucleoside 5'-triphosphate = DNA(n+1) + diphosphate. Replicates the viral genomic DNA. This polymerase possesses two enzymatic activities: DNA synthesis (polymerase) and an exonucleolytic activity that degrades single-stranded DNA in the 3'-5' direction for proofreading purpose. The DNA synthesis very likely occurs by strand displacement. The chain is DNA polymerase from Escherichia phage T5 (Enterobacteria phage T5).